A 204-amino-acid chain; its full sequence is Imidazole glycerol phosphate synthase subunit HisH (204 aa).

The Glutamine amidotransferase type-1 domain occupies 1-204 (MIKIVDYGLG…MTLLKNFSEI (204 aa)). Cysteine 80 serves as the catalytic Nucleophile. Active-site residues include histidine 186 and glutamate 188.

In terms of assembly, heterodimer of HisH and HisF.

The protein localises to the cytoplasm. The enzyme catalyses 5-[(5-phospho-1-deoxy-D-ribulos-1-ylimino)methylamino]-1-(5-phospho-beta-D-ribosyl)imidazole-4-carboxamide + L-glutamine = D-erythro-1-(imidazol-4-yl)glycerol 3-phosphate + 5-amino-1-(5-phospho-beta-D-ribosyl)imidazole-4-carboxamide + L-glutamate + H(+). It carries out the reaction L-glutamine + H2O = L-glutamate + NH4(+). It participates in amino-acid biosynthesis; L-histidine biosynthesis; L-histidine from 5-phospho-alpha-D-ribose 1-diphosphate: step 5/9. In terms of biological role, IGPS catalyzes the conversion of PRFAR and glutamine to IGP, AICAR and glutamate. The HisH subunit catalyzes the hydrolysis of glutamine to glutamate and ammonia as part of the synthesis of IGP and AICAR. The resulting ammonia molecule is channeled to the active site of HisF. This chain is Imidazole glycerol phosphate synthase subunit HisH, found in Bdellovibrio bacteriovorus (strain ATCC 15356 / DSM 50701 / NCIMB 9529 / HD100).